The chain runs to 144 residues: MNFKYIVAVSFLIASAYARSEENDEQSLSQRDVLEEESLREIRGIGAKILGGVKTALKGALKELASTYVNGKRTAEDHEVMKRLEAVMRDLDSLDYPEEAAERETRGFNQEEIANLFTKKEKRILGPVIKTIGGVLGGLLKNLG.

Residues 1-18 (MNFKYIVAVSFLIASAYA) form the signal peptide. Residues 19–43 (RSEENDEQSLSQRDVLEEESLREIR) constitute a propeptide that is removed on maturation. At asparagine 70 the chain carries Asparagine amide. Residues 74–123 (TAEDHEVMKRLEAVMRDLDSLDYPEEAAERETRGFNQEEIANLFTKKEKR) constitute a propeptide that is removed on maturation. Leucine 143 is subject to Leucine amide.

It belongs to the bombinin family. In terms of tissue distribution, expressed by the skin glands.

It localises to the secreted. Its function is as follows. Maximin-7 shows antimicrobial activity against bacteria and against the fungus C.albicans. It has little hemolytic activity. Maximin-H13 shows antimicrobial activity against bacteria and against the fungus C.albicans. Shows strong hemolytic activity. This chain is Maximins 7/H13, found in Bombina maxima (Giant fire-bellied toad).